Reading from the N-terminus, the 61-residue chain is Large ribosomal subunit protein eL24 (61 aa).

4 residues coordinate Zn(2+): C7, C10, C33, and C37. A C4-type zinc finger spans residues 7–37; the sequence is CSFCGHEIPPGTGLMYVRNDGTILWFCSSKC.

This sequence belongs to the eukaryotic ribosomal protein eL24 family. In terms of assembly, part of the 50S ribosomal subunit. Forms a cluster with proteins L3 and L14. It depends on Zn(2+) as a cofactor.

In terms of biological role, binds to the 23S rRNA. The polypeptide is Large ribosomal subunit protein eL24 (Saccharolobus islandicus (strain Y.N.15.51 / Yellowstone #2) (Sulfolobus islandicus)).